We begin with the raw amino-acid sequence, 553 residues long: CTP synthase (553 aa).

The segment at 1 to 278 (MVRRTHGNSQ…DAYVVRELGL (278 aa)) is amidoligase domain. Serine 25 is a binding site for CTP. Serine 25 contributes to the UTP binding site. Residues 26–31 (SLGKGL) and aspartate 83 each bind ATP. Aspartate 83 and glutamate 152 together coordinate Mg(2+). CTP contacts are provided by residues 159–161 (DIE), 199–204 (KTKPTQ), and lysine 235. UTP-binding positions include 199–204 (KTKPTQ) and lysine 235. Residues 303-552 (NIAIVGKYID…VKAALDHQAA (250 aa)) form the Glutamine amidotransferase type-1 domain. Position 366 (glycine 366) interacts with L-glutamine. The active-site Nucleophile; for glutamine hydrolysis is the cysteine 393. Residues 394–397 (LGLQ), glutamate 417, and arginine 478 each bind L-glutamine. Residues histidine 525 and glutamate 527 contribute to the active site.

Belongs to the CTP synthase family. Homotetramer.

It carries out the reaction UTP + L-glutamine + ATP + H2O = CTP + L-glutamate + ADP + phosphate + 2 H(+). The catalysed reaction is L-glutamine + H2O = L-glutamate + NH4(+). The enzyme catalyses UTP + NH4(+) + ATP = CTP + ADP + phosphate + 2 H(+). Its pathway is pyrimidine metabolism; CTP biosynthesis via de novo pathway; CTP from UDP: step 2/2. Allosterically activated by GTP, when glutamine is the substrate; GTP has no effect on the reaction when ammonia is the substrate. The allosteric effector GTP functions by stabilizing the protein conformation that binds the tetrahedral intermediate(s) formed during glutamine hydrolysis. Inhibited by the product CTP, via allosteric rather than competitive inhibition. Catalyzes the ATP-dependent amination of UTP to CTP with either L-glutamine or ammonia as the source of nitrogen. Regulates intracellular CTP levels through interactions with the four ribonucleotide triphosphates. The protein is CTP synthase of Bifidobacterium longum (strain NCC 2705).